Consider the following 323-residue polypeptide: ADP-L-glycero-D-manno-heptose-6-epimerase (323 aa).

Residues phenylalanine 10–isoleucine 11, aspartate 31–asparagine 32, lysine 38, lysine 53, glutamate 75–serine 79, and asparagine 92 each bind NADP(+). Tyrosine 139 functions as the Proton acceptor in the catalytic mechanism. Position 143 (lysine 143) interacts with NADP(+). Asparagine 168 provides a ligand contact to substrate. The NADP(+) site is built by valine 169 and lysine 177. The Proton acceptor role is filled by lysine 177. Residues aspartate 179, lysine 186, phenylalanine 200–tyrosine 203, arginine 213, and tyrosine 277 contribute to the substrate site.

It belongs to the NAD(P)-dependent epimerase/dehydratase family. HldD subfamily. In terms of assembly, homopentamer. The cofactor is NADP(+).

The catalysed reaction is ADP-D-glycero-beta-D-manno-heptose = ADP-L-glycero-beta-D-manno-heptose. The protein operates within nucleotide-sugar biosynthesis; ADP-L-glycero-beta-D-manno-heptose biosynthesis; ADP-L-glycero-beta-D-manno-heptose from D-glycero-beta-D-manno-heptose 7-phosphate: step 4/4. Catalyzes the interconversion between ADP-D-glycero-beta-D-manno-heptose and ADP-L-glycero-beta-D-manno-heptose via an epimerization at carbon 6 of the heptose. The protein is ADP-L-glycero-D-manno-heptose-6-epimerase of Hydrogenovibrio crunogenus (strain DSM 25203 / XCL-2) (Thiomicrospira crunogena).